A 242-amino-acid chain; its full sequence is MPTSSKNQPRYKRVLLKLSGEALMGEHDFGIDPKVLDRMALEIGALIGIGVQVGLVIGGGNLFRGAALNAAGLDRVTGDHMGMLATVMNGLAMRDALERSNIRTRVMSAIPMSGIVEHYDRRRAVRDLKEGDVVIFSAGTGNPFFTTDSAACLRGIEIEADAVLKATKVDGVYSADPHLDPTAVKYDHLTYDEVLDKKLGVMDLTAICLARDHGMPLRVFDMNRPGVLTRIVTGEREGTLIE.

17-20 serves as a coordination point for ATP; it reads KLSG. Residue glycine 59 coordinates UMP. ATP contacts are provided by glycine 60 and arginine 64. UMP contacts are provided by residues aspartate 79 and 140-147; that span reads TGNPFFTT. Residues threonine 167, tyrosine 173, and aspartate 176 each contribute to the ATP site.

It belongs to the UMP kinase family. As to quaternary structure, homohexamer.

It localises to the cytoplasm. It carries out the reaction UMP + ATP = UDP + ADP. It participates in pyrimidine metabolism; CTP biosynthesis via de novo pathway; UDP from UMP (UMPK route): step 1/1. Inhibited by UTP. Functionally, catalyzes the reversible phosphorylation of UMP to UDP. In Marinobacter nauticus (strain ATCC 700491 / DSM 11845 / VT8) (Marinobacter aquaeolei), this protein is Uridylate kinase.